A 335-amino-acid chain; its full sequence is dTDP-glucose 4,6-dehydratase (335 aa).

NAD(+) is bound by residues 11–12, 38–41, 61–62, 81–85, and T100; these read FI, DKLT, DI, and FAAET. Residue T85 coordinates substrate. T125 provides a ligand contact to substrate. The active-site Proton donor is D126. Active-site proton acceptor residues include E127 and Y149. 149 to 153 serves as a coordination point for NAD(+); sequence YSASK. N178 is a binding site for substrate. N179 is a binding site for NAD(+). Substrate-binding positions include 188-189, 204-206, R213, N248, and 271-275; these read KI, PLY, and DRKGH.

Belongs to the NAD(P)-dependent epimerase/dehydratase family. dTDP-glucose dehydratase subfamily. NAD(+) serves as cofactor.

The catalysed reaction is dTDP-alpha-D-glucose = dTDP-4-dehydro-6-deoxy-alpha-D-glucose + H2O. The protein operates within antibiotic biosynthesis. Functionally, involved in the biosynthesis of the two 2,6-deoxysugars, dTDP-L-oleandrose and dTDP-D-desosamine, attached to the macrolactone ring oleandolide to produce the aglycone antibiotic oleandomycin. Catalyzes the dehydration of dTDP-D-glucose to form dTDP-6-deoxy-D-xylo-4-hexulose via a three-step process involving oxidation, dehydration and reduction. The chain is dTDP-glucose 4,6-dehydratase from Streptomyces antibioticus.